Reading from the N-terminus, the 991-residue chain is MADSSSTSAFISTLIIYGLTAVVFVWLFLLLRPKNRRVYEPRSLKDIQTIPEEERTEPVPEGYFGWVEYLLSKPHSFLIQHTSVDGYFLLRYIGIVGSLSFVGCLLLLPILLPVNATNGNNLQGFELLSFSNVTNKNRFYAHVFLSWIFFGLFTYVIYKELYYYVVFRHAMQTTPLYDGLLSSRTVIVTELHKSIAQEGEMQMRFPKASNVAFAYDLSDLQELCKERAKNAAKYEAALNKVLNKCVKMTRNKTQKQLDKLYNNGTKPKDDLETYVPHKKRPKHRLGKLPLCLGGKKVNTLSYSSKRIGELNEEIHEKQADWASNDRQPACFIQFETQLEAQRCYQSVEAILGKKNFGKRLIGYSPEDVNWGSMRLSSKERHSRRAVANTIMVLLIIFWAFPVAVVGIISNVNFLTDKVPFLRFINNMPTFLMGVITGLLPTIALVVLMSLVPPFIVMLGKLSGCVTRQETDLYSQAWYYAFAVIQIFLVVTATSSASSTVDSIIDRPRSAMTLLANNLPKASNFYIMYFILKGLTGPTWTILQAVNLLLSKVLGRVLDSTPRQKWNRYNTLATPRMGIVYPGIEILVCIYICYSIIAPILLFFSTVMLTLLYVAYLYNLNYVFGFSFDLKGRNYPRALFQIFVGIYLSEVCLLGLFIMAKTWGPLVLEVFWIVVTALAHIYMKRKFIPLFDAVPLSAIRHARGEPGYSYPTSDLGLQEIKDIADEMKGKYEQDNTHGILTPVTKDDLKKANLIPDNDGSSENGTPSNPFESGSERASLSGSNAESDSIKKLNDTVIKKSSTLSSSTKDNNESTFVPEGEKFRKFHYSDVEALRNKRPYDEDDHSKHGPEGAVPVNADAGVIYSDPAAVMKEPQAFPPDVLETNTWTRRILQFFNPRRSYPFDSVRMRFPLVFNTSIEYDEEYLSSAYTDPCVREKDPIVWCCKDPLGVSKQQIQEARSNGLDVRDDFTRYDEKGKVIFTYNPPDYEPEAKK.

Over 1 to 9 (MADSSSTSA) the chain is Extracellular. A helical membrane pass occupies residues 10 to 30 (FISTLIIYGLTAVVFVWLFLL). At 31–91 (LRPKNRRVYE…TSVDGYFLLR (61 aa)) the chain is on the cytoplasmic side. A helical membrane pass occupies residues 92–112 (YIGIVGSLSFVGCLLLLPILL). The Extracellular segment spans residues 113-138 (PVNATNGNNLQGFELLSFSNVTNKNR). N-linked (GlcNAc...) asparagine glycosylation is found at Asn115 and Asn132. A helical transmembrane segment spans residues 139-159 (FYAHVFLSWIFFGLFTYVIYK). The Cytoplasmic portion of the chain corresponds to 160 to 388 (ELYYYVVFRH…ERHSRRAVAN (229 aa)). A helical transmembrane segment spans residues 389–409 (TIMVLLIIFWAFPVAVVGIIS). Residues 410-437 (NVNFLTDKVPFLRFINNMPTFLMGVITG) lie on the Extracellular side of the membrane. A helical membrane pass occupies residues 438-458 (LLPTIALVVLMSLVPPFIVML). Over 459 to 471 (GKLSGCVTRQETD) the chain is Cytoplasmic. The helical transmembrane segment at 472–492 (LYSQAWYYAFAVIQIFLVVTA) threads the bilayer. The Extracellular portion of the chain corresponds to 493–523 (TSSASSTVDSIIDRPRSAMTLLANNLPKASN). Residues 524–544 (FYIMYFILKGLTGPTWTILQA) form a helical membrane-spanning segment. Over 545-582 (VNLLLSKVLGRVLDSTPRQKWNRYNTLATPRMGIVYPG) the chain is Cytoplasmic. Residues 583–603 (IEILVCIYICYSIIAPILLFF) traverse the membrane as a helical segment. Position 604 (Ser604) is a topological domain, extracellular. Residues 605–625 (TVMLTLLYVAYLYNLNYVFGF) traverse the membrane as a helical segment. Over 626–637 (SFDLKGRNYPRA) the chain is Cytoplasmic. The helical transmembrane segment at 638–658 (LFQIFVGIYLSEVCLLGLFIM) threads the bilayer. Residues 659-661 (AKT) lie on the Extracellular side of the membrane. A helical membrane pass occupies residues 662 to 682 (WGPLVLEVFWIVVTALAHIYM). Residues 683-991 (KRKFIPLFDA…PPDYEPEAKK (309 aa)) are Cytoplasmic-facing. The interval 749–787 (KANLIPDNDGSSENGTPSNPFESGSERASLSGSNAESDS) is disordered. A compositionally biased stretch (polar residues) spans 757-785 (DGSSENGTPSNPFESGSERASLSGSNAES).

Belongs to the CSC1 (TC 1.A.17) family.

The protein localises to the cell membrane. Functionally, acts as an osmosensitive calcium-permeable cation channel. This is Phosphate metabolism protein 7 (PHM7) from Saccharomyces cerevisiae (strain ATCC 204508 / S288c) (Baker's yeast).